Consider the following 294-residue polypeptide: 4-diphosphocytidyl-2-C-methyl-D-erythritol kinase (294 aa).

The active site involves K15. 101 to 111 (PSEAGLGGGSS) contributes to the ATP binding site. D143 is a catalytic residue.

This sequence belongs to the GHMP kinase family. IspE subfamily.

It catalyses the reaction 4-CDP-2-C-methyl-D-erythritol + ATP = 4-CDP-2-C-methyl-D-erythritol 2-phosphate + ADP + H(+). It participates in isoprenoid biosynthesis; isopentenyl diphosphate biosynthesis via DXP pathway; isopentenyl diphosphate from 1-deoxy-D-xylulose 5-phosphate: step 3/6. Functionally, catalyzes the phosphorylation of the position 2 hydroxy group of 4-diphosphocytidyl-2C-methyl-D-erythritol. The chain is 4-diphosphocytidyl-2-C-methyl-D-erythritol kinase from Fusobacterium nucleatum subsp. nucleatum (strain ATCC 25586 / DSM 15643 / BCRC 10681 / CIP 101130 / JCM 8532 / KCTC 2640 / LMG 13131 / VPI 4355).